Reading from the N-terminus, the 72-residue chain is Large ribosomal subunit protein bL28 (72 aa).

This sequence belongs to the bacterial ribosomal protein bL28 family.

This chain is Large ribosomal subunit protein bL28, found in Chlorobium limicola (strain DSM 245 / NBRC 103803 / 6330).